A 356-amino-acid polypeptide reads, in one-letter code: Phosphoribosylformylglycinamidine cyclo-ligase (356 aa).

Belongs to the AIR synthase family.

The protein resides in the cytoplasm. The catalysed reaction is 2-formamido-N(1)-(5-O-phospho-beta-D-ribosyl)acetamidine + ATP = 5-amino-1-(5-phospho-beta-D-ribosyl)imidazole + ADP + phosphate + H(+). Its pathway is purine metabolism; IMP biosynthesis via de novo pathway; 5-amino-1-(5-phospho-D-ribosyl)imidazole from N(2)-formyl-N(1)-(5-phospho-D-ribosyl)glycinamide: step 2/2. This chain is Phosphoribosylformylglycinamidine cyclo-ligase, found in Sinorhizobium medicae (strain WSM419) (Ensifer medicae).